The sequence spans 425 residues: Gamma-glutamyl phosphate reductase (425 aa).

This sequence belongs to the gamma-glutamyl phosphate reductase family.

It localises to the cytoplasm. It catalyses the reaction L-glutamate 5-semialdehyde + phosphate + NADP(+) = L-glutamyl 5-phosphate + NADPH + H(+). It participates in amino-acid biosynthesis; L-proline biosynthesis; L-glutamate 5-semialdehyde from L-glutamate: step 2/2. Catalyzes the NADPH-dependent reduction of L-glutamate 5-phosphate into L-glutamate 5-semialdehyde and phosphate. The product spontaneously undergoes cyclization to form 1-pyrroline-5-carboxylate. The protein is Gamma-glutamyl phosphate reductase of Aromatoleum aromaticum (strain DSM 19018 / LMG 30748 / EbN1) (Azoarcus sp. (strain EbN1)).